We begin with the raw amino-acid sequence, 292 residues long: Glutamate racemase (292 aa).

Substrate-binding positions include aspartate 10–serine 11 and tyrosine 42–glycine 43. Residue cysteine 73 is the Proton donor/acceptor of the active site. Residue asparagine 74–serine 75 participates in substrate binding. The Proton donor/acceptor role is filled by cysteine 186. Threonine 187–histidine 188 provides a ligand contact to substrate.

It belongs to the aspartate/glutamate racemases family.

It carries out the reaction L-glutamate = D-glutamate. It functions in the pathway cell wall biogenesis; peptidoglycan biosynthesis. Its function is as follows. Provides the (R)-glutamate required for cell wall biosynthesis. This chain is Glutamate racemase, found in Beutenbergia cavernae (strain ATCC BAA-8 / DSM 12333 / CCUG 43141 / JCM 11478 / NBRC 16432 / NCIMB 13614 / HKI 0122).